A 1513-amino-acid chain; its full sequence is Protein tincar (1513 aa).

The Cytoplasmic segment spans residues 1–77 (MGGKHQGSGA…DSGSYLHLNS (77 aa)). Residues 78-98 (LWSIWYGVMLTLFQGYLAMHG) traverse the membrane as a helical segment. The Extracellular portion of the chain corresponds to 99–120 (AYRFLGCSLIPWKIEPVAELNL). The chain crosses the membrane as a helical span at residues 121–141 (QIVLSGVVFILLPVFFTSAVF). Over 142–181 (KVGNLANDGIKLATGARERRCTLSPHDGLEEESRGGTLRA) the chain is Cytoplasmic. The chain crosses the membrane as a helical span at residues 182-202 (LWTHGGPTAAFVHIVIALCLL). The Extracellular portion of the chain corresponds to 203–668 (LPRLLLEARI…VAIFSQPPSA (466 aa)). Disordered regions lie at residues 247-266 (TPFP…HQHG), 354-373 (ERQE…DEGV), and 383-532 (MPDF…SIHR). The span at 427 to 466 (ASSSSSSTTSTTTTTTTSTTTTAATTTSTRGTSTTTTTTT) shows a compositional bias: low complexity. Over residues 478-507 (SAHHHHGKSRKHHKHHNKQRQQQPPRRHHV) the composition is skewed to basic residues. The segment covering 523-532 (TTTRDSSIHR) has biased composition (basic and acidic residues). A helical transmembrane segment spans residues 669–689 (EFVNLLCALLVWSVRYPAVFW). Residues 690 to 696 (NTSKAFA) are Cytoplasmic-facing. The helical transmembrane segment at 697 to 717 (CVFSLQMVVAALDIILGYVGI) threads the bilayer. Over 718-736 (SNLYKLQIYAEAMPVHQPG) the chain is Extracellular. The helical transmembrane segment at 737–757 (LILNAVVTLALYLLSTALVLA) threads the bilayer. The Cytoplasmic segment spans residues 758 to 787 (SSMVMYLYGHGRLATRMRDRSIITLKTHQT). The helical transmembrane segment at 788–808 (WIYFAHCASLCFVLALAVVKA) threads the bilayer. The Extracellular portion of the chain corresponds to 809-826 (PLLNDLSATYKNNLHCPT). Residues 827 to 847 (FLAALVGVTHLLLWIVIWLCL) form a helical membrane-spanning segment. Residues 848–1513 (TIKRRWHFKL…CGLYVTAQLH (666 aa)) lie on the Cytoplasmic side of the membrane. Composition is skewed to low complexity over residues 879–903 (SSGQ…VNGG) and 1060–1071 (QQQQQQQQQQRQ). Disordered regions lie at residues 879–913 (SSGQ…MSTA), 1045–1090 (EYDE…SGLG), 1115–1155 (ASTS…HSAG), 1173–1214 (EHHH…PHQH), and 1231–1335 (AHIA…DPAA). Over residues 1122 to 1149 (PPQPSAQAPPPPPPLPIKGAPVPQPPAV) the composition is skewed to pro residues. 2 stretches are compositionally biased toward low complexity: residues 1179 to 1208 (LQHS…LQQQ) and 1255 to 1285 (TPRS…SGVH). Residues 1286–1296 (SGEERELEVII) are compositionally biased toward basic and acidic residues. A compositionally biased stretch (pro residues) spans 1303–1314 (KPPPRPPQPPIQ). Residues 1324 to 1335 (MRMSSFNADPAA) are compositionally biased toward polar residues.

In terms of tissue distribution, expression varies in tissues throughout development. At stage 5, expressed in the embryo dorsal region followed by expression in a striped pattern at stage 6. During gastrulation, expressed in ventral region and ventral nerve cord. Also detected in many neurons in the externa sensilla and chordotonal organ. At stage 16, expressed on the surface of the midgut. Additionally, expressed in a subset of cardioblasts (Tin+ subpopulation) during dorsal vessel formation. In third-instar larval tissues, expressed in the eye and antennal disks. In the antennal disks, expressed in the second antennal segments. In the eye disks, strongest expression found in the ocelli, and in the differentiating ommatidial cells. Also expressed in all cells within and in the vicinity of the morphogenetic furrow.

Its subcellular location is the membrane. Its function is as follows. Involved in eye morphogenesis. May be essential for the normal differentiation of ommatidial cells. This is Protein tincar (tinc) from Drosophila melanogaster (Fruit fly).